The chain runs to 190 residues: Membrane protein FAM174A (190 aa).

The N-terminal stretch at 1–29 is a signal peptide; the sequence is MPTRRGCSGPCHFLASAFVLLLLPALNQS. Residues N27 and N83 are each glycosylated (N-linked (GlcNAc...) asparagine). Over 30–123 the chain is Extracellular; that stretch reads VVLPSTVPRA…NPSDKPMTQR (94 aa). The disordered stretch occupies residues 37–119; the sequence is PRAVQESKPL…AVSPNPSDKP (83 aa). Residues 124-144 form a helical membrane-spanning segment; it reads ALTVLVVVSAAVLVYFVVRTV. The Cytoplasmic portion of the chain corresponds to 145-190; it reads RMRRRNRKTRRYGVLDTNIENMELTPLEQDDEDDDNTLFDANHPRR. The segment at 168–190 is disordered; it reads LTPLEQDDEDDDNTLFDANHPRR. Positions 172–181 are enriched in acidic residues; the sequence is EQDDEDDDNT.

Belongs to the FAM174 family.

Its subcellular location is the membrane. In Rattus norvegicus (Rat), this protein is Membrane protein FAM174A (Fam174a).